A 303-amino-acid polypeptide reads, in one-letter code: Small ribosomal subunit protein bS1m (303 aa).

Residue Ser-2 is modified to N-acetylserine. A mitochondrion; not cleaved-targeting transit peptide spans 2–13 (SFAQILRGSRAM).

Belongs to the bacterial ribosomal protein bS1 family. As to quaternary structure, component of the mitochondrial small ribosomal subunit (mt-SSU). Mature yeast 74S mitochondrial ribosomes consist of a small (37S) and a large (54S) subunit. The 37S small subunit contains a 15S ribosomal RNA (15S mt-rRNA) and at least 32 different proteins. The 54S large subunit contains a 21S rRNA (21S mt-rRNA) and at least 45 different proteins. This subunit is mutually exclusive with mug178/small ribosomal subunit protein L51-b.

It localises to the mitochondrion. Functionally, component of the mitochondrial ribosome (mitoribosome), a dedicated translation machinery responsible for the synthesis of mitochondrial genome-encoded proteins, including at least some of the essential transmembrane subunits of the mitochondrial respiratory chain. The mitoribosomes are attached to the mitochondrial inner membrane and translation products are cotranslationally integrated into the membrane. bS1m functionally interacts with the 5'-UTR of mitochondrial mRNAs. Plays an essential role in mitochondrial translation. In Schizosaccharomyces pombe (strain 972 / ATCC 24843) (Fission yeast), this protein is Small ribosomal subunit protein bS1m (mrp51).